Reading from the N-terminus, the 379-residue chain is Stimulator of interferon genes protein (379 aa).

Helical transmembrane passes span 20 to 40 (VAAFVLLIVCLAALWKLGEPS), 87 to 107 (ACLGCPIRYGAVLLLSCYFYV), and 115 to 135 (LPLTWMLAHLGLSEALNILLG). S-palmitoyl cysteine attachment occurs at residues Cys-88 and Cys-91. Residues 153-340 (FNVAHGLAWS…KHLRQEEREE (188 aa)) form a cyclic dinucleotide-binding domain (CBD) region. 2',3'-cGAMP contacts are provided by Ser-162, Tyr-167, Arg-238, and Thr-263. Residues Ser-162, Tyr-167, 238–241 (RVYT), and Thr-263 contribute to the 3',3'-c-di-GMP site. Tyr-167, Arg-238, and Thr-263 together coordinate 2',3'-cUAMP. The interval 340 to 379 (EVTMGTAGTFVAPGSSTLHQEPELLISGMDQPLPLRTDIF) is C-terminal tail (CTT). Phosphoserine is present on Ser-355. Position 356 is a phosphothreonine (Thr-356). The pLxIS motif motif lies at 363–366 (LLIS). Ser-366 carries the phosphoserine; by TBK1 modification.

The protein belongs to the STING family. As to quaternary structure, homodimer; forms a homodimer in absence of cyclic nucleotide (c-di-GMP or cGAMP). Homotetramer; in presence of cyclic nucleotide (c-di-GMP or cGAMP), forms tetramers and higher-order oligomers through side-by-side packing. Interacts (when phosphorylated) with IRF3; following activation and phosphorylation on the pLxIS motif by TBK1, recruits IRF3. Interacts with TBK1; when homodimer, leading to subsequent production of IFN-beta. Interacts (via transmembrane domain) with TMEM203. Phosphorylation by TBK1 leads to activation and production of IFN-beta. Following cyclic nucleotide (c-di-GMP or cGAMP)-binding, activation and translocation from the endoplasmic reticulum, STING1 is phosphorylated by TBK1 at Ser-366 in the pLxIS motif. The phosphorylated pLxIS motif constitutes an IRF3-binding motif, leading to recruitment of the transcription factor IRF3 to induce type-I interferons and other cytokines. In contrast, lacks phosphorylation site at position 358, leading to reduced production of type-I interferons and other cytokines.

Its subcellular location is the endoplasmic reticulum membrane. The protein localises to the cytoplasm. It localises to the perinuclear region. It is found in the endoplasmic reticulum-Golgi intermediate compartment membrane. The protein resides in the golgi apparatus membrane. Its subcellular location is the cytoplasmic vesicle. The protein localises to the autophagosome membrane. It localises to the mitochondrion outer membrane. It is found in the cell membrane. It carries out the reaction H(+)(in) = H(+)(out). Its function is as follows. Facilitator of innate immune signaling that acts as a sensor of cytosolic DNA from bacteria and viruses and promotes low production of type I interferon (IFN-alpha and IFN-beta). Compared to other mammals, STING1-dependent type I interferon induction is strongly reduced in bats, suggesting that the cGAS-STING pathway promotes a limited inflammatory response. Innate immune response is triggered in response to non-CpG double-stranded DNA from viruses and bacteria delivered to the cytoplasm. Acts by binding cyclic dinucleotides: recognizes and binds cyclic di-GMP (c-di-GMP), a second messenger produced by bacteria, cyclic UMP-AMP (2',3'-cUAMP), and cyclic GMP-AMP (cGAMP), a messenger produced by CGAS in response to DNA virus in the cytosol. Upon binding to c-di-GMP, cUAMP or cGAMP, STING1 oligomerizes, translocates from the endoplasmic reticulum and is phosphorylated by TBK1 on the pLxIS motif, leading to recruitment and subsequent activation of the transcription factor IRF3 to induce expression of type I interferon and exert a potent anti-viral state. In addition to promote the production of type I interferons, plays a direct role in autophagy. Following cGAMP-binding, STING1 buds from the endoplasmic reticulum into COPII vesicles, which then form the endoplasmic reticulum-Golgi intermediate compartment (ERGIC). The ERGIC serves as the membrane source for WIPI2 recruitment and LC3 lipidation, leading to formation of autophagosomes that target cytosolic DNA or DNA viruses for degradation by the lysosome. Promotes autophagy by acting as a proton channel that directs proton efflux from the Golgi to facilitate MAP1LC3B/LC3B lipidation. The autophagy- and interferon-inducing activities can be uncoupled and autophagy induction is independent of TBK1 phosphorylation. The chain is Stimulator of interferon genes protein from Eidolon helvum (Straw-colored fruit bat).